The chain runs to 201 residues: Holliday junction branch migration complex subunit RuvA (201 aa).

The tract at residues 1 to 61 (MIEFVKGTID…EDAFSLYGFS (61 aa)) is domain I. Positions 62-140 (TREEKALFTK…DVVPEMIDNL (79 aa)) are domain II. Residues 141–150 (FNHEARIEKQ) form a flexible linker region. Residues 151–201 (EAETALDEALEALRVLGYAEKEIKKVLPHLKEETALSTDQYVKKALQKLLK) form a domain III region.

It belongs to the RuvA family. In terms of assembly, homotetramer. Forms an RuvA(8)-RuvB(12)-Holliday junction (HJ) complex. HJ DNA is sandwiched between 2 RuvA tetramers; dsDNA enters through RuvA and exits via RuvB. An RuvB hexamer assembles on each DNA strand where it exits the tetramer. Each RuvB hexamer is contacted by two RuvA subunits (via domain III) on 2 adjacent RuvB subunits; this complex drives branch migration. In the full resolvosome a probable DNA-RuvA(4)-RuvB(12)-RuvC(2) complex forms which resolves the HJ.

The protein localises to the cytoplasm. In terms of biological role, the RuvA-RuvB-RuvC complex processes Holliday junction (HJ) DNA during genetic recombination and DNA repair, while the RuvA-RuvB complex plays an important role in the rescue of blocked DNA replication forks via replication fork reversal (RFR). RuvA specifically binds to HJ cruciform DNA, conferring on it an open structure. The RuvB hexamer acts as an ATP-dependent pump, pulling dsDNA into and through the RuvAB complex. HJ branch migration allows RuvC to scan DNA until it finds its consensus sequence, where it cleaves and resolves the cruciform DNA. The protein is Holliday junction branch migration complex subunit RuvA of Bacillus velezensis (strain DSM 23117 / BGSC 10A6 / LMG 26770 / FZB42) (Bacillus amyloliquefaciens subsp. plantarum).